A 129-amino-acid polypeptide reads, in one-letter code: Glycine cleavage system H protein (129 aa).

In terms of domain architecture, Lipoyl-binding spans 24–106; it reads TYTVGITEHA…YADGWIFKIK (83 aa). Lysine 65 is subject to N6-lipoyllysine.

It belongs to the GcvH family. The glycine cleavage system is composed of four proteins: P, T, L and H. Requires (R)-lipoate as cofactor.

Functionally, the glycine cleavage system catalyzes the degradation of glycine. The H protein shuttles the methylamine group of glycine from the P protein to the T protein. This Salmonella arizonae (strain ATCC BAA-731 / CDC346-86 / RSK2980) protein is Glycine cleavage system H protein.